We begin with the raw amino-acid sequence, 357 residues long: 4-hydroxy-3-methylbut-2-en-1-yl diphosphate synthase (flavodoxin) (357 aa).

Residues cysteine 264, cysteine 267, cysteine 299, and glutamate 306 each contribute to the [4Fe-4S] cluster site.

This sequence belongs to the IspG family. The cofactor is [4Fe-4S] cluster.

The catalysed reaction is (2E)-4-hydroxy-3-methylbut-2-enyl diphosphate + oxidized [flavodoxin] + H2O + 2 H(+) = 2-C-methyl-D-erythritol 2,4-cyclic diphosphate + reduced [flavodoxin]. It participates in isoprenoid biosynthesis; isopentenyl diphosphate biosynthesis via DXP pathway; isopentenyl diphosphate from 1-deoxy-D-xylulose 5-phosphate: step 5/6. In terms of biological role, converts 2C-methyl-D-erythritol 2,4-cyclodiphosphate (ME-2,4cPP) into 1-hydroxy-2-methyl-2-(E)-butenyl 4-diphosphate. The sequence is that of 4-hydroxy-3-methylbut-2-en-1-yl diphosphate synthase (flavodoxin) from Campylobacter jejuni (strain RM1221).